We begin with the raw amino-acid sequence, 507 residues long: 2,3-bisphosphoglycerate-independent phosphoglycerate mutase (507 aa).

Mn(2+) contacts are provided by D13 and S63. The active-site Phosphoserine intermediate is the S63. Substrate contacts are provided by residues H122, 152–153 (RD), R184, R190, 256–259 (RADR), and K330. D397, H401, D438, H439, and H457 together coordinate Mn(2+).

This sequence belongs to the BPG-independent phosphoglycerate mutase family. In terms of assembly, monomer. It depends on Mn(2+) as a cofactor.

The enzyme catalyses (2R)-2-phosphoglycerate = (2R)-3-phosphoglycerate. The protein operates within carbohydrate degradation; glycolysis; pyruvate from D-glyceraldehyde 3-phosphate: step 3/5. Its function is as follows. Catalyzes the interconversion of 2-phosphoglycerate and 3-phosphoglycerate. This chain is 2,3-bisphosphoglycerate-independent phosphoglycerate mutase, found in Chromobacterium violaceum (strain ATCC 12472 / DSM 30191 / JCM 1249 / CCUG 213 / NBRC 12614 / NCIMB 9131 / NCTC 9757 / MK).